Here is a 583-residue protein sequence, read N- to C-terminus: Putative ABC transporter ATP-binding protein exp8 (583 aa).

The ABC transmembrane type-1 domain occupies 25–308; it reads TFLALSFLLA…VTQNFSTLQT (284 aa). Transmembrane regions (helical) follow at residues 26–46, 61–81, 135–155, 159–179, and 259–279; these read FLALSFLLATTVIKSVIPLVA, AVTVLLVYYGLYILQTVVQYV, MFSGILSSFISAVFIFLTTLY, VLDFRLTALVLLFLPLIFLLV, and LGYAVLMAYFGYRGFSIGITV. Residues 341–574 form the ABC transporter domain; the sequence is IRFEHVCFSY…GGTYHKMYSL (234 aa). 374–381 provides a ligand contact to ATP; it reads GHTGSGKS.

The protein belongs to the ABC transporter superfamily.

Its subcellular location is the cell membrane. In Streptococcus pneumoniae serotype 4 (strain ATCC BAA-334 / TIGR4), this protein is Putative ABC transporter ATP-binding protein exp8 (exp8).